Reading from the N-terminus, the 314-residue chain is Formate-nitrite transporter (314 aa).

Residues methionine 1 to alanine 47 are Cytoplasmic-facing. The chain crosses the membrane as a helical span at residues isoleucine 48–phenylalanine 68. The Extracellular segment spans residues tyrosine 69–valine 77. The chain crosses the membrane as a helical span at residues glycine 78–isoleucine 98. The Cytoplasmic segment spans residues cysteine 99–arginine 128. The helical transmembrane segment at valine 129–serine 149 threads the bilayer. The Extracellular segment spans residues tyrosine 150–cysteine 185. The chain crosses the membrane as a helical span at residues isoleucine 186–isoleucine 206. Over lysine 207–glycine 211 the chain is Cytoplasmic. A helical membrane pass occupies residues leucine 212 to isoleucine 232. At alanine 233–proline 260 the chain is on the extracellular side. A helical membrane pass occupies residues threonine 261–tyrosine 281. The Cytoplasmic portion of the chain corresponds to arginine 282 to isoleucine 314.

This sequence belongs to the FNT transporter (TC 1.A.16) family. Homopentamer.

It localises to the cell membrane. The protein resides in the vacuole membrane. The catalysed reaction is (S)-lactate(in) + H(+)(in) = (S)-lactate(out) + H(+)(out). The enzyme catalyses formate(in) + H(+)(in) = formate(out) + H(+)(out). It catalyses the reaction pyruvate(out) + H(+)(out) = pyruvate(in) + H(+)(in). It carries out the reaction acetate(out) + H(+)(out) = acetate(in) + H(+)(in). Inhibited by the Malaria Box compound MMV007839 and its derivatives BH296 and BH267.meta. Its function is as follows. Monocarboxylate-proton symporter that mediates the efflux of the waste product lactate in the intraerythrocytic parasites; active in acidic-to-neutral pH range. Transports L-lactate. In Plasmodium malariae, this protein is Formate-nitrite transporter.